Here is a 167-residue protein sequence, read N- to C-terminus: 3-isopropylmalate dehydratase small subunit (167 aa).

It belongs to the LeuD family. LeuD type 2 subfamily. In terms of assembly, heterodimer of LeuC and LeuD.

The enzyme catalyses (2R,3S)-3-isopropylmalate = (2S)-2-isopropylmalate. It participates in amino-acid biosynthesis; L-leucine biosynthesis; L-leucine from 3-methyl-2-oxobutanoate: step 2/4. In terms of biological role, catalyzes the isomerization between 2-isopropylmalate and 3-isopropylmalate, via the formation of 2-isopropylmaleate. The sequence is that of 3-isopropylmalate dehydratase small subunit from Sulfurimonas denitrificans (strain ATCC 33889 / DSM 1251) (Thiomicrospira denitrificans (strain ATCC 33889 / DSM 1251)).